The sequence spans 693 residues: Homeobox protein caupolican (693 aa).

6 disordered regions span residues 20 to 104 (TANT…PSRG), 288 to 331 (NKMT…PGNQ), 387 to 453 (AQSH…DCGI), 480 to 538 (YLGQ…PLSM), 561 to 627 (MHLP…SMHS), and 648 to 693 (YGHG…RSGS). The segment covering 41–59 (ASLSPSGGSTATGLTAGPL) has biased composition (low complexity). A DNA-binding region (homeobox; TALE-type) is located at residues 226–288 (LAARRKNATR…NARRRLKKEN (63 aa)). Basic and acidic residues-rich tracts occupy residues 288 to 298 (NKMTWEPKNKT) and 308 to 317 (DDEKEKDAGD). 2 stretches are compositionally biased toward low complexity: residues 397-419 (HPQQMQHHQQQQQQQQNQQQLQH) and 493-515 (QQLPHQPLQQHQQQQLQQLQQQQ). Residues 516–527 (QHHHHPHHHHPH) show a composition bias toward basic residues. Positions 609-627 (SSGGSSSSSGSSHSSSMHS) are enriched in low complexity. The segment covering 651–675 (GHSHGHGHGHGHGLGHGHGLGHGHG) has biased composition (basic residues).

Belongs to the TALE/IRO homeobox family.

Its subcellular location is the nucleus. Functionally, controls proneural and vein forming genes. Positive transcriptional controller of ac-sc (achaete-scute). May act as an activator that interacts with the transcriptional complex assembled on the ac and sc promoters and participates in transcription initiation. The protein is Homeobox protein caupolican (caup) of Drosophila melanogaster (Fruit fly).